The sequence spans 240 residues: BLOC-1-related complex subunit 8 homolog (240 aa).

Disordered stretches follow at residues 1-33 (MSSI…GSHG) and 163-240 (KTFS…EKIN). Composition is skewed to low complexity over residues 7–26 (SSTG…NNIS) and 163–179 (KTFS…QQQQ). Residues 180 to 190 (TNLTPSKPTLS) are compositionally biased toward polar residues. Residues 196–205 (DNNNNNNNLN) show a composition bias toward low complexity. Residues 208-240 (EKIEKEEKIEKEDEGKEKDEKEKDDKDLNEKIN) are compositionally biased toward basic and acidic residues. Residues 211–239 (EKEEKIEKEDEGKEKDEKEKDDKDLNEKI) adopt a coiled-coil conformation.

It belongs to the BORCS8 family.

Its subcellular location is the lysosome membrane. Its function is as follows. May participate in the coupling of lysosomes to microtubule plus-end-directed kinesin motor. The polypeptide is BLOC-1-related complex subunit 8 homolog (Dictyostelium discoideum (Social amoeba)).